We begin with the raw amino-acid sequence, 437 residues long: Glucose-1-phosphate adenylyltransferase (437 aa).

Residues Y113, G179, 194 to 195 (EK), and S212 each bind alpha-D-glucose 1-phosphate.

This sequence belongs to the bacterial/plant glucose-1-phosphate adenylyltransferase family. Homotetramer.

The enzyme catalyses alpha-D-glucose 1-phosphate + ATP + H(+) = ADP-alpha-D-glucose + diphosphate. It participates in glycan biosynthesis; glycogen biosynthesis. Its function is as follows. Involved in the biosynthesis of ADP-glucose, a building block required for the elongation reactions to produce glycogen. Catalyzes the reaction between ATP and alpha-D-glucose 1-phosphate (G1P) to produce pyrophosphate and ADP-Glc. This chain is Glucose-1-phosphate adenylyltransferase, found in Haemophilus influenzae (strain ATCC 51907 / DSM 11121 / KW20 / Rd).